The sequence spans 525 residues: Glutamate--cysteine ligase (525 aa).

The protein belongs to the glutamate--cysteine ligase type 1 family. Type 1 subfamily.

It catalyses the reaction L-cysteine + L-glutamate + ATP = gamma-L-glutamyl-L-cysteine + ADP + phosphate + H(+). Its pathway is sulfur metabolism; glutathione biosynthesis; glutathione from L-cysteine and L-glutamate: step 1/2. In Pseudoalteromonas translucida (strain TAC 125), this protein is Glutamate--cysteine ligase.